A 182-amino-acid polypeptide reads, in one-letter code: Ribosome maturation factor RimM (182 aa).

The PRC barrel domain occupies 103–182; it reads EDEFYWRELF…RIEVDWDPAF (80 aa).

Belongs to the RimM family. In terms of assembly, binds ribosomal protein uS19.

It is found in the cytoplasm. Functionally, an accessory protein needed during the final step in the assembly of 30S ribosomal subunit, possibly for assembly of the head region. Essential for efficient processing of 16S rRNA. May be needed both before and after RbfA during the maturation of 16S rRNA. It has affinity for free ribosomal 30S subunits but not for 70S ribosomes. The protein is Ribosome maturation factor RimM of Vibrio cholerae serotype O1 (strain ATCC 39315 / El Tor Inaba N16961).